The chain runs to 126 residues: uncharacterized protein (126 aa).

Disordered regions lie at residues 15-72 and 93-126; these read PEWG…SDPQ and TQIPEASDSQAAQKPQAHRQIPETTEAGRETTSN. Composition is skewed to basic and acidic residues over residues 29 to 46 and 55 to 64; these read DPLDRRLQNLRDRERVPE and VQEDSREHGQ.

This is an uncharacterized protein from Homo sapiens (Human).